Consider the following 922-residue polypeptide: Dual serine/threonine and tyrosine protein kinase (922 aa).

A Protein kinase domain is found at 645–899 (PKLGRELGRG…PLLGIVEPSL (255 aa)). Residues 651–659 (LGRGQYGVV) and Lys674 each bind ATP. Residue Asp770 is the Proton acceptor of the active site.

The protein belongs to the protein kinase superfamily. Ser/Thr protein kinase family.

It localises to the cytoplasm. The protein localises to the cell membrane. It is found in the apical cell membrane. Its subcellular location is the basolateral cell membrane. The protein resides in the cell junction. It carries out the reaction L-seryl-[protein] + ATP = O-phospho-L-seryl-[protein] + ADP + H(+). The enzyme catalyses L-threonyl-[protein] + ATP = O-phospho-L-threonyl-[protein] + ADP + H(+). The catalysed reaction is L-tyrosyl-[protein] + ATP = O-phospho-L-tyrosyl-[protein] + ADP + H(+). May act as a positive regulator of ERK phosphorylation downstream of fibroblast growth factor-receptor activation. May induce both caspase-dependent apoptosis and caspase-independent cell death. May play a role in the embryonic development. The polypeptide is Dual serine/threonine and tyrosine protein kinase (Tetraodon nigroviridis (Spotted green pufferfish)).